The primary structure comprises 303 residues: Bifunctional protein FolD (303 aa).

NADP(+) is bound by residues 175 to 177 and Ile-243; that span reads GVS.

Belongs to the tetrahydrofolate dehydrogenase/cyclohydrolase family. As to quaternary structure, homodimer.

It catalyses the reaction (6R)-5,10-methylene-5,6,7,8-tetrahydrofolate + NADP(+) = (6R)-5,10-methenyltetrahydrofolate + NADPH. The catalysed reaction is (6R)-5,10-methenyltetrahydrofolate + H2O = (6R)-10-formyltetrahydrofolate + H(+). It functions in the pathway one-carbon metabolism; tetrahydrofolate interconversion. In terms of biological role, catalyzes the oxidation of 5,10-methylenetetrahydrofolate to 5,10-methenyltetrahydrofolate and then the hydrolysis of 5,10-methenyltetrahydrofolate to 10-formyltetrahydrofolate. The sequence is that of Bifunctional protein FolD from Xanthomonas oryzae pv. oryzae (strain PXO99A).